Consider the following 139-residue polypeptide: uncharacterized protein (139 aa).

To E.coli YecT.

This is an uncharacterized protein from Rhizobium meliloti (strain 1021) (Ensifer meliloti).